We begin with the raw amino-acid sequence, 566 residues long: Phenylalanine--tRNA ligase beta subunit (566 aa).

The B5 domain maps to 287 to 362; the sequence is YFQEEVEFNV…IGEGLSSFNP (76 aa). 4 residues coordinate Mg(2+): aspartate 340, aspartate 346, glutamate 349, and aspartate 350.

This sequence belongs to the phenylalanyl-tRNA synthetase beta subunit family. Type 2 subfamily. In terms of assembly, tetramer of two alpha and two beta subunits. It depends on Mg(2+) as a cofactor.

The protein localises to the cytoplasm. The catalysed reaction is tRNA(Phe) + L-phenylalanine + ATP = L-phenylalanyl-tRNA(Phe) + AMP + diphosphate + H(+). In Borreliella burgdorferi (strain ATCC 35210 / DSM 4680 / CIP 102532 / B31) (Borrelia burgdorferi), this protein is Phenylalanine--tRNA ligase beta subunit.